The primary structure comprises 448 residues: MREIVHLQTGQCGNQIGAAFWQTISGEHGLDSNGVYNGTSELQLERMSVYFNEASGNKYVPRAVLVDLEPGTMDAVRAGPFGQLFRPDNFVFGQSGAGNNWAKGHYTEGAELVDNVLDVVRREAEGCDCLQGFQITHSLGGGTGAGMGTLLISKIREEFPDRMMATFSVVPSPKVSDTVVEPYNATLSVHQLVENSDETFCIDNEALYDICMRTLKLSNPSYGDLNYLVSAVMSGVTTCLRFPGQLNSDLRKLAVNMVPFPRLHFFMVGFAPLTSRGAHSFRAVSVPELTQQMFDPKNMMAASDFRNGRYLTCSAIFRGKVAMKEVEDQMRNVQNKNSSYFVEWIPNNIQTALCAIPPRGLKMSSTFIGNSTSIQELFKRVGEQFTAMFRRKAFLHWYTGEGMDEMEFTEAESNMNDLVSEYQQYQDAGVDEEEEEYDEEAPVEEPLE.

The GTP site is built by Gln11, Glu69, Ser138, Gly142, Thr143, Gly144, Asn204, and Asn226. Glu69 contributes to the Mg(2+) binding site. The tract at residues 425 to 448 (YQDAGVDEEEEEYDEEAPVEEPLE) is disordered. The segment covering 429–448 (GVDEEEEEYDEEAPVEEPLE) has biased composition (acidic residues).

The protein belongs to the tubulin family. In terms of assembly, dimer of alpha and beta chains. A typical microtubule is a hollow water-filled tube with an outer diameter of 25 nm and an inner diameter of 15 nM. Alpha-beta heterodimers associate head-to-tail to form protofilaments running lengthwise along the microtubule wall with the beta-tubulin subunit facing the microtubule plus end conferring a structural polarity. Microtubules usually have 13 protofilaments but different protofilament numbers can be found in some organisms and specialized cells. Requires Mg(2+) as cofactor.

It localises to the cytoplasm. The protein resides in the cytoskeleton. Its function is as follows. Tubulin is the major constituent of microtubules, a cylinder consisting of laterally associated linear protofilaments composed of alpha- and beta-tubulin heterodimers. Microtubules grow by the addition of GTP-tubulin dimers to the microtubule end, where a stabilizing cap forms. Below the cap, tubulin dimers are in GDP-bound state, owing to GTPase activity of alpha-tubulin. This Metarhizium anisopliae (Entomophthora anisopliae) protein is Tubulin beta chain.